The sequence spans 371 residues: Vasopressin V2 receptor (371 aa).

Residues 1–38 are Extracellular-facing; sequence MLLVSTVSAVPGLFSPPSSPSNSSQEELLDDRDPLLVR. The N-linked (GlcNAc...) asparagine glycan is linked to Asn22. The helical transmembrane segment at 39–63 threads the bilayer; it reads AELALLSTIFVAVALSNGLVLGALI. Over 64–77 the chain is Cytoplasmic; it reads RRGRRGRWAPMHVF. A helical membrane pass occupies residues 78–98; sequence ISHLCLADLAVALFQVLPQLA. The Extracellular portion of the chain corresponds to 99–113; that stretch reads WDATDRFHGPDALCR. The helical transmembrane segment at 114 to 135 threads the bilayer; it reads AVKYLQMVGMYASSYMILAMTL. The Cytoplasmic segment spans residues 136–159; sequence DRHRAICRPMLAYRHGGGARWNRP. The helical transmembrane segment at 160 to 180 threads the bilayer; the sequence is VLVAWAFSLLLSLPQLFIFAQ. Topologically, residues 181–200 are extracellular; sequence RDVGNGSGVFDCWARFAEPW. Asn185 is a glycosylation site (N-linked (GlcNAc...) asparagine). A helical transmembrane segment spans residues 201–220; that stretch reads GLRAYVTWIALMVFVAPALG. Residues 221–271 are Cytoplasmic-facing; the sequence is IAACQVLIFREIHASLVPGPSERAGRRRRGRRTGSPSEGAHVSAAMAKTVR. The disordered stretch occupies residues 240–260; sequence PSERAGRRRRGRRTGSPSEGA. The chain crosses the membrane as a helical span at residues 272–293; that stretch reads MTLVIVIVYVLCWAPFFLVQLW. Residues 294 to 308 are Extracellular-facing; the sequence is AAWDPEAPLERPPFV. The helical transmembrane segment at 309–328 threads the bilayer; it reads LLMLLASLNSCTNPWIYASF. At 329-371 the chain is on the cytoplasmic side; that stretch reads SSSVSSELRSLLCCAQRHTTHSLGPQDESCATASSSLMKDTPS. 2 S-palmitoyl cysteine lipidation sites follow: Cys341 and Cys342. The interval 349–371 is disordered; sequence HSLGPQDESCATASSSLMKDTPS. Positions 357-371 are enriched in polar residues; that stretch reads SCATASSSLMKDTPS.

This sequence belongs to the G-protein coupled receptor 1 family. Vasopressin/oxytocin receptor subfamily. In terms of assembly, interacts with ARRDC4. Identified in a complex containing at least ARRDC4, V2R and HGS. Interacts with TMEM147. In terms of tissue distribution, kidney.

It is found in the cell membrane. Its function is as follows. Receptor for arginine vasopressin. The activity of this receptor is mediated by G proteins which activate adenylate cyclase. Involved in renal water reabsorption. In Rattus norvegicus (Rat), this protein is Vasopressin V2 receptor (Avpr2).